The chain runs to 232 residues: Ribonuclease HII (232 aa).

One can recognise an RNase H type-2 domain in the interval 26–218 (RILCGVDEAG…VRRALEGMSA (193 aa)). Positions 32, 33, and 127 each coordinate a divalent metal cation.

The protein belongs to the RNase HII family. Requires Mn(2+) as cofactor. Mg(2+) is required as a cofactor.

The protein resides in the cytoplasm. The catalysed reaction is Endonucleolytic cleavage to 5'-phosphomonoester.. Endonuclease that specifically degrades the RNA of RNA-DNA hybrids. This is Ribonuclease HII from Ralstonia pickettii (strain 12J).